A 165-amino-acid chain; its full sequence is Chorismate pyruvate-lyase (165 aa).

4 residues coordinate substrate: Met35, Arg77, Leu115, and Glu156.

The protein belongs to the UbiC family. As to quaternary structure, monomer.

The protein resides in the cytoplasm. The catalysed reaction is chorismate = 4-hydroxybenzoate + pyruvate. The protein operates within cofactor biosynthesis; ubiquinone biosynthesis. In terms of biological role, removes the pyruvyl group from chorismate, with concomitant aromatization of the ring, to provide 4-hydroxybenzoate (4HB) for the ubiquinone pathway. This Shigella boydii serotype 18 (strain CDC 3083-94 / BS512) protein is Chorismate pyruvate-lyase.